A 474-amino-acid chain; its full sequence is UDP-N-acetylmuramate--L-alanine ligase (474 aa).

Residue 115 to 121 coordinates ATP; the sequence is GTHGKTT.

The protein belongs to the MurCDEF family.

The protein resides in the cytoplasm. The catalysed reaction is UDP-N-acetyl-alpha-D-muramate + L-alanine + ATP = UDP-N-acetyl-alpha-D-muramoyl-L-alanine + ADP + phosphate + H(+). It participates in cell wall biogenesis; peptidoglycan biosynthesis. Cell wall formation. The sequence is that of UDP-N-acetylmuramate--L-alanine ligase from Novosphingobium aromaticivorans (strain ATCC 700278 / DSM 12444 / CCUG 56034 / CIP 105152 / NBRC 16084 / F199).